We begin with the raw amino-acid sequence, 402 residues long: Non-structural protein 3 (402 aa).

Residues 334–402 enclose the DRBM domain; it reads PDILVTLNDY…AYDILDQLGI (69 aa).

The protein belongs to the rotavirus NSP3 family.

Its subcellular location is the host cytoplasm. Functionally, may play a role in stimulating the translation of viral mRNAs. This is Non-structural protein 3 from Rotavirus C (isolate RVC/Human/United Kingdom/Bristol/1989) (RV-C).